Reading from the N-terminus, the 579-residue chain is Insulin-like growth factor 2 mRNA-binding protein 3 (579 aa).

RRM domains follow at residues 2-75 (NKLY…HSVP) and 81-156 (RKLQ…YIPD). Positions 158–192 (TAAQQNPSPQLRGRRGPGQRGSSRQASPGSVSKQK) are disordered. Ser165 carries the post-translational modification Phosphoserine. Position 184 is a phosphoserine; by MTOR (Ser184). 3 consecutive KH domains span residues 195 to 260 (DLPL…CKSI), 276 to 343 (EIPL…EEEI), and 405 to 470 (TETV…QGRI). Residues Lys450 and Lys475 each participate in a glycyl lysine isopeptide (Lys-Gly) (interchain with G-Cter in SUMO2) cross-link. Residues 487 to 553 (KLEAHIRVPS…YACQVAQRKI (67 aa)) form the KH 4 domain. Residue Thr528 is modified to Phosphothreonine.

The protein belongs to the RRM IMP/VICKZ family. Can form homooligomers and heterooligomers with IGF2BP1 and IGF2BP3 in an RNA-dependent manner. Interacts with IGF2BP1. Interacts with ELAVL1, DHX9, HNRNPU, MATR3 and PABPC1. As to expression, expressed in oocytes, spermatogonia and spermatocytes (at protein level).

The protein localises to the nucleus. It is found in the cytoplasm. It localises to the P-body. Its subcellular location is the stress granule. Its function is as follows. RNA-binding factor that may recruit target transcripts to cytoplasmic protein-RNA complexes (mRNPs). This transcript 'caging' into mRNPs allows mRNA transport and transient storage. It also modulates the rate and location at which target transcripts encounter the translational apparatus and shields them from endonuclease attacks or microRNA-mediated degradation. Preferentially binds to N6-methyladenosine (m6A)-containing mRNAs and increases their stability. Binds to the 3'-UTR of CD44 mRNA and stabilizes it, hence promotes cell adhesion and invadopodia formation. Binds to beta-actin/ACTB and MYC transcripts. Increases MYC mRNA stability by binding to the coding region instability determinant (CRD) and binding is enhanced by m6A-modification of the CRD. Binds to the 5'-UTR of the insulin-like growth factor 2 (IGF2) mRNAs. The protein is Insulin-like growth factor 2 mRNA-binding protein 3 (Igf2bp3) of Mus musculus (Mouse).